Reading from the N-terminus, the 205-residue chain is Guanylate kinase (205 aa).

Residues 17 to 195 (SRLLVLSGPS…AVEAVERLLF (179 aa)) form the Guanylate kinase-like domain. 24 to 31 (GPSGVGKD) contacts ATP.

It belongs to the guanylate kinase family.

Its subcellular location is the cytoplasm. The catalysed reaction is GMP + ATP = GDP + ADP. In terms of biological role, essential for recycling GMP and indirectly, cGMP. This chain is Guanylate kinase, found in Gloeobacter violaceus (strain ATCC 29082 / PCC 7421).